The following is a 280-amino-acid chain: Lipase chaperone (280 aa).

The chain crosses the membrane as a helical span at residues A5–L22.

Belongs to the lipase chaperone family.

The protein resides in the cell inner membrane. Functionally, may be involved in the folding of the extracellular lipase during its passage through the periplasm. The chain is Lipase chaperone (lifO) from Vibrio vulnificus (strain YJ016).